The chain runs to 304 residues: Syntaxin-132 (304 aa).

Met1 carries the N-acetylmethionine modification. Residues 1-30 (MNDLLKGSFELPRGQSSREGDVELGEQQGG) are disordered. The Cytoplasmic segment spans residues 1–275 (MNDLLKGSFE…AKSLQKNSRK (275 aa)). Coiled-coil stretches lie at residues 34–67 (LEDF…ESKS) and 129–162 (TLSL…DRRV). In terms of domain architecture, t-SNARE coiled-coil homology spans 204-266 (LAEIQERHDA…QSGNTALQRA (63 aa)). Residues 276-296 (WMCIAIIILLIVVAVIVVGVL) form a helical; Anchor for type IV membrane protein membrane-spanning segment. The Vesicular portion of the chain corresponds to 297–304 (KPWKNKSA).

The protein belongs to the syntaxin family. As to quaternary structure, part of the t-SNARE complex. As to expression, widely expressed in all tissues throughout plant development.

Its subcellular location is the cell membrane. Functionally, vesicle trafficking protein that functions in the secretory pathway. Acts in coordination with SYP123 to mediate tip-focused membrane trafficking for root hair tip growth. Functions in root hair elongation by forming SNARE complexes with VAMP721,VAMP722 or VAMP724. Involved in cytokinesis. Acts as a cell plate-specific syntaxin, required for the fusion of vesicles at the plane of cell division. Required for secretory trafficking to the plasma membrane during interphase. Involved in the regulation of density of the H(+) ATPase proteins at the plasma membrane of root and shoot in epidermal cells. Modulation of SYP132 expression by auxin affects clathrin-sensitive H(+) ATPase traffic from the plasma membrane, and influences apoplastic acidification and plant growth. This Arabidopsis thaliana (Mouse-ear cress) protein is Syntaxin-132.